Reading from the N-terminus, the 400-residue chain is MDFNMKKLASDAGIFFTRAVQFTEEKFGQAEKTELDAHFENLLARADSTKNWTERILRQTEVLLQPNPSARVEEFLYEKLDRKVPSRVTNGELLAQYMAEAASELGPSTPYGKTLIKVSEAEKRLGAAERDFIHTASLSFLTPLRNFLEGDWKTISKERRLLQNRRLDLDACKARLKKAKAAEAKATTVPDFQETRPRNYILSASASALWNDEVDKAEQELRVAQTEFDRQAEVTRLLLEGISSTHVNHLRCLHEFVKSQTTYYAQCYRHMLDLQKQLGSSQGAIFPGTFVGTTEPASPPLSSTSPTTTAATMPVVPTGAVLAPPEEAALCLEEVAPPASGTRKARVLYDYEAADSSELALLADELITVYSLPGMDPDWLIGERGNKKGKVPVTYLELLS.

M1 carries the N-acetylmethionine modification. The tract at residues 1-27 is membrane-binding amphipathic helix; it reads MDFNMKKLASDAGIFFTRAVQFTEEKF. S10 bears the Phosphoserine mark. Positions 24-287 constitute a BAR domain; that stretch reads EEKFGQAEKT…LGSSQGAIFP (264 aa). A coiled-coil region spans residues 205-234; it reads SASALWNDEVDKAEQELRVAQTEFDRQAEV. Positions 340–400 constitute an SH3 domain; sequence SGTRKARVLY…VPVTYLELLS (61 aa). At S400 the chain carries Phosphoserine.

The protein belongs to the endophilin family. As to quaternary structure, homodimer, and heterodimer with SH3GLB1.

It is found in the cytoplasm. The chain is Endophilin-B2 (Sh3glb2) from Mus musculus (Mouse).